The sequence spans 180 residues: Large ribosomal subunit protein uL6 (180 aa).

The protein belongs to the universal ribosomal protein uL6 family. In terms of assembly, part of the 50S ribosomal subunit.

Its function is as follows. This protein binds to the 23S rRNA, and is important in its secondary structure. It is located near the subunit interface in the base of the L7/L12 stalk, and near the tRNA binding site of the peptidyltransferase center. In Salinispora tropica (strain ATCC BAA-916 / DSM 44818 / JCM 13857 / NBRC 105044 / CNB-440), this protein is Large ribosomal subunit protein uL6.